We begin with the raw amino-acid sequence, 338 residues long: MVDHEGEDSSPADGFGHIPVLLHRADELLGPALTANDPHGGGAVMIDATLGLGGHSEHFLRTYPQLRLVALDRDPHALEIAGGRLAPFADRITFVHTRYDGIEDALTQAGLSPRESVHGILFDLGVSSMQLDESDRGFAYSIDAPLDMRMDPTTGITAAEVLNTYSHGDLARILSTYGEERFAGKIASEVVRQRAKEPFTTSAALVELLYRTIPAATRRTGGHPAKRTFQALRVEVNGELDSLRAAVPAALDALTVGGRVVFMSYQSLEDRVVKQEITPRSKSKSPEGLPVELPGMGPEFRILTRGAERASEQEIEENPRSAPVRLRAAERIARRSAA.

Residues 53–55, D72, Y99, D123, and Q130 each bind S-adenosyl-L-methionine; that span reads GGH. Positions 277-298 are disordered; sequence ITPRSKSKSPEGLPVELPGMGP.

This sequence belongs to the methyltransferase superfamily. RsmH family.

Its subcellular location is the cytoplasm. It carries out the reaction cytidine(1402) in 16S rRNA + S-adenosyl-L-methionine = N(4)-methylcytidine(1402) in 16S rRNA + S-adenosyl-L-homocysteine + H(+). Functionally, specifically methylates the N4 position of cytidine in position 1402 (C1402) of 16S rRNA. This Rhodococcus opacus (strain B4) protein is Ribosomal RNA small subunit methyltransferase H.